Consider the following 531-residue polypeptide: Probable rhamnogalacturonate lyase A (531 aa).

A signal peptide spans 1–20; sequence MLSKTSLLSLLSLAAGVVNA. 2 disulfide bridges follow: cysteine 50–cysteine 93 and cysteine 184–cysteine 193.

The protein belongs to the polysaccharide lyase 4 family.

It localises to the secreted. It carries out the reaction Endotype eliminative cleavage of L-alpha-rhamnopyranosyl-(1-&gt;4)-alpha-D-galactopyranosyluronic acid bonds of rhamnogalacturonan I domains in ramified hairy regions of pectin leaving L-rhamnopyranose at the reducing end and 4-deoxy-4,5-unsaturated D-galactopyranosyluronic acid at the non-reducing end.. Functionally, pectinolytic enzymes consist of four classes of enzymes: pectin lyase, polygalacturonase, pectin methylesterase and rhamnogalacturonase. Degrades the rhamnogalacturonan I (RG-I) backbone of pectin. The polypeptide is Probable rhamnogalacturonate lyase A (rglA) (Aspergillus niger (strain ATCC MYA-4892 / CBS 513.88 / FGSC A1513)).